We begin with the raw amino-acid sequence, 78 residues long: Large ribosomal subunit protein bL28 (78 aa).

The disordered stretch occupies residues 1–20 (MSQVCQVTGKRPVVGNNRSH).

This sequence belongs to the bacterial ribosomal protein bL28 family.

This is Large ribosomal subunit protein bL28 from Idiomarina loihiensis (strain ATCC BAA-735 / DSM 15497 / L2-TR).